The chain runs to 730 residues: Multifunctional procollagen lysine hydroxylase and glycosyltransferase (730 aa).

The signal sequence occupies residues 1–16 (MRVLPFLLPLIPVLLA). The required for glycosyltransferase activity stretch occupies residues 20 to 280 (TDLPELVVVT…CGLEVKESEE (261 aa)). UDP-binding positions include 30–32 (VAT) and 98–100 (DAY). D98, D101, and H242 together coordinate Mn(2+). 245 to 248 (GPSK) serves as a coordination point for UDP. C268 and C271 form a disulfide bridge. The segment at 281-507 (VPLIALNLFI…YYGFLIVSDE (227 aa)) is accessory region. C554 and C690 are disulfide-bonded. The 2-oxoglutarate site is built by R590 and Y648. The 92-residue stretch at 639–730 (ESNMMFVVRY…RYIMVSFINP (92 aa)) folds into the Fe2OG dioxygenase domain. Residues H659 and D661 each contribute to the Fe cation site. The interval 664–707 (TFSIDIALNKKGRDYEGGGVRYIRYNCTVPADEVGYAMMFPGRL) is important for dimerization. A glycan (N-linked (GlcNAc...) asparagine) is linked at N689. Position 711 (H711) interacts with Fe cation. R721 lines the 2-oxoglutarate pocket.

As to quaternary structure, homodimer. Fe(2+) is required as a cofactor. L-ascorbate serves as cofactor. The cofactor is Mn(2+).

It localises to the rough endoplasmic reticulum. It is found in the endoplasmic reticulum lumen. The protein localises to the endoplasmic reticulum membrane. Its subcellular location is the secreted. The protein resides in the extracellular space. The enzyme catalyses L-lysyl-[collagen] + 2-oxoglutarate + O2 = (5R)-5-hydroxy-L-lysyl-[collagen] + succinate + CO2. It catalyses the reaction (5R)-5-hydroxy-L-lysyl-[collagen] + UDP-alpha-D-galactose = (5R)-5-O-(beta-D-galactosyl)-5-hydroxy-L-lysyl-[collagen] + UDP + H(+). It carries out the reaction (5R)-5-O-(beta-D-galactosyl)-5-hydroxy-L-lysyl-[collagen] + UDP-alpha-D-glucose = (5R)-5-O-[alpha-D-glucosyl-(1-&gt;2)-beta-D-galactosyl]-5-hydroxy-L-lysyl-[collagen] + UDP + H(+). In terms of biological role, multifunctional enzyme that catalyzes a series of post-translational modifications on Lys residues in procollagen. Catalyzes the formation of hydroxylysine residues in -Xaa-Lys-Gly- sequences in type IV collagens. Transfers galactose onto hydroxylysine groups, giving rise to galactosyl 5-hydroxylysine. Catalyzes the subsequent transfer of glucose moieties, giving rise to 1,2-glucosylgalactosyl-5-hydroxylysine residues. Essential for normal biosynthesis and secretion of type IV collagens. Essential for normal stability of the basement membrane. This is Multifunctional procollagen lysine hydroxylase and glycosyltransferase (let-268) from Caenorhabditis elegans.